Here is a 160-residue protein sequence, read N- to C-terminus: Bacterial microcompartment shell protein PduK (160 aa).

One can recognise a BMC domain in the interval 11–96; that stretch reads SLGLLEVCGL…PGEGILLAET (86 aa).

Belongs to the bacterial microcompartments protein family. As to quaternary structure, interacts with shell proteins PduA and PduP and assembly protein PduM. It depends on Fe cation as a cofactor.

It is found in the bacterial microcompartment. It functions in the pathway polyol metabolism; 1,2-propanediol degradation. A minor shell protein of the bacterial microcompartment (BMC) dedicated to 1,2-propanediol (1,2-PD) degradation. The isolated BMC shell component protein ratio for J:A:B':B:K:T:U is approximately 15:10:7:6:1:1:2. Not required for structural integrity of BMCs nor to mitigate propionaldehyde toxicity, it might be involved in spatial organization of BMCs. Its function is as follows. The 1,2-PD-specific bacterial microcompartment (BMC) concentrates low levels of 1,2-PD catabolic enzymes, concentrates volatile reaction intermediates thus enhancing pathway flux and keeps the level of toxic, mutagenic propionaldehyde low. This chain is Bacterial microcompartment shell protein PduK, found in Salmonella typhimurium (strain LT2 / SGSC1412 / ATCC 700720).